The primary structure comprises 395 residues: uncharacterized protein (395 aa).

Residues 288–318 (VAKGKEIDNAEIEKTIKEYENIEEGIEDIVK) are a coiled coil.

This is an uncharacterized protein from Ostreid herpesvirus 1 (isolate France) (OsHV-1).